The sequence spans 162 residues: Probable chemoreceptor glutamine deamidase CheD (162 aa).

It belongs to the CheD family.

The enzyme catalyses L-glutaminyl-[protein] + H2O = L-glutamyl-[protein] + NH4(+). Probably deamidates glutamine residues to glutamate on methyl-accepting chemotaxis receptors (MCPs), playing an important role in chemotaxis. This Caldanaerobacter subterraneus subsp. tengcongensis (strain DSM 15242 / JCM 11007 / NBRC 100824 / MB4) (Thermoanaerobacter tengcongensis) protein is Probable chemoreceptor glutamine deamidase CheD.